The chain runs to 279 residues: NH(3)-dependent NAD(+) synthetase (279 aa).

46–53 is a binding site for ATP; sequence GVSGGQDS. Aspartate 52 provides a ligand contact to Mg(2+). Residue arginine 139 coordinates deamido-NAD(+). Threonine 159 is a binding site for ATP. Glutamate 164 contacts Mg(2+). Residues lysine 172 and aspartate 179 each contribute to the deamido-NAD(+) site. The ATP site is built by lysine 188 and threonine 210. A deamido-NAD(+)-binding site is contributed by 259–260; that stretch reads HK.

Belongs to the NAD synthetase family. Homodimer.

It catalyses the reaction deamido-NAD(+) + NH4(+) + ATP = AMP + diphosphate + NAD(+) + H(+). Its pathway is cofactor biosynthesis; NAD(+) biosynthesis; NAD(+) from deamido-NAD(+) (ammonia route): step 1/1. In terms of biological role, catalyzes the ATP-dependent amidation of deamido-NAD to form NAD. Uses ammonia as a nitrogen source. This chain is NH(3)-dependent NAD(+) synthetase, found in Leifsonia xyli subsp. xyli (strain CTCB07).